Here is a 259-residue protein sequence, read N- to C-terminus: Global transcriptional regulator CodY (259 aa).

The tract at residues 1–155 (MELLAKTRKL…SSTVVGMEIL (155 aa)) is GAF domain. Residues 203–222 (ASKIADRVGITRSVIVNALR) constitute a DNA-binding region (H-T-H motif). A Phosphoserine modification is found at serine 215.

It belongs to the CodY family.

Its subcellular location is the cytoplasm. Functionally, DNA-binding global transcriptional regulator which is involved in the adaptive response to starvation and acts by directly or indirectly controlling the expression of numerous genes in response to nutrient availability. During rapid exponential growth, CodY is highly active and represses genes whose products allow adaptation to nutrient depletion. This is Global transcriptional regulator CodY from Bacillus mycoides (strain KBAB4) (Bacillus weihenstephanensis).